The chain runs to 879 residues: Interference hedgehog (879 aa).

The first 20 residues, 1–20 (MTLLTSSLLLFSLLTSRLEA), serve as a signal peptide directing secretion. Over 21 to 703 (IPVLEKSPAH…ETFNMSPMLT (683 aa)) the chain is Extracellular. Ig-like C2-type domains follow at residues 45 to 142 (PGVR…IARL), 132 to 232 (PLVV…ERIQ), 252 to 340 (PHLL…YIKV), and 346 to 432 (PQIV…LQVN). 4 cysteine pairs are disulfide-bonded: Cys68–Cys126, Cys173–Cys220, Cys276–Cys324, and Cys367–Cys414. 2 N-linked (GlcNAc...) asparagine glycosylation sites follow: Asn102 and Asn209. A disordered region spans residues 426-467 (GTLLQVNPKQIQEPRESGGTHRPKPNQGSKQKQMYPPSPPNV). 2 Fibronectin type-III domains span residues 461–567 (PPSP…LQPG) and 575–670 (VPEL…TQRP). Residue Asn466 is glycosylated (N-linked (GlcNAc...) asparagine). Positions 497, 501, 503, and 541 each coordinate heparin. N-linked (GlcNAc...) asparagine glycosylation is present at Asn557. Residues 662-698 (LKQGRTQRPKTSTTEEPTLQMGDRDTTTPSHNETFNM) are disordered. Polar residues-rich tracts occupy residues 665–678 (GRTQ…TEEP) and 688–698 (TTPSHNETFNM). An N-linked (GlcNAc...) asparagine glycan is attached at Asn693. The helical transmembrane segment at 704-724 (GTLGGGAVLTLLLISICLCVC) threads the bilayer. Residues 725-879 (RRRSSRSRGN…SSGSLNSVGV (155 aa)) are Cytoplasmic-facing. A disordered region spans residues 728–879 (SSRSRGNNPN…SSGSLNSVGV (152 aa)). Composition is skewed to low complexity over residues 822 to 836 (RAGG…NNNN) and 863 to 879 (SSRS…SVGV).

It belongs to the immunoglobulin superfamily. IHOG family. As to quaternary structure, homodimer. Heterotetramer; 2 iHog chains bind 2 hh chains when facilitated by heparin, heparin is required to promote high-affinity interactions between hh and iHog.

It localises to the membrane. Functionally, mediates response to the active Hedgehog (Hh) protein signal in embryos, functioning upstream or at the level of patched (ptc). This Drosophila erecta (Fruit fly) protein is Interference hedgehog.